Consider the following 1327-residue polypeptide: P-glycoprotein 14 (1327 aa).

Residues 1–17 (MAPKDDPDNRGFDDQRR) are compositionally biased toward basic and acidic residues. A disordered region spans residues 1–23 (MAPKDDPDNRGFDDQRRPSQRST). At 1 to 104 (MAPKDDPDNR…RYGKKFDYLL (104 aa)) the chain is on the cytoplasmic side. A helical membrane pass occupies residues 105 to 125 (LFIGTICAIISGVSQPILALV). Residues 106-394 (FIGTICAIIS…ISPHMMVLLN (289 aa)) enclose the ABC transmembrane type-1 1 domain. Residues 126 to 151 (SGRVTNALLVYPPTSKQFRNKANENV) lie on the Extracellular side of the membrane. A helical transmembrane segment spans residues 152–172 (YIFLGIGIFISITNFIQYMCF). The Cytoplasmic segment spans residues 173-225 (QHCCTRVMAQMRHRFVYSVLRQNAGWFDKNHSGTITTKLNDSMERIREGIGDK). A helical membrane pass occupies residues 226 to 246 (LGVLLRGFAMLIAAIVVAYIY). Position 247 (E247) is a topological domain, extracellular. The helical transmembrane segment at 248–268 (WRLASMMLGVAPTCCICMSLL) threads the bilayer. The Cytoplasmic portion of the chain corresponds to 269-331 (ARQMTSTTIK…KFAVWKGFWS (63 aa)). The chain crosses the membrane as a helical span at residues 332–352 (GFFGGLFFFWLFSFLGCGMLY). Residues 353 to 364 (GAYLLKVGIITT) lie on the Extracellular side of the membrane. The helical transmembrane segment at 365-385 (PGDVFIVVMSMLLGAYFLGLI) threads the bilayer. Residues 386-766 (SPHMMVLLNA…NAKGNYLYMF (381 aa)) lie on the Cytoplasmic side of the membrane. Residues 429–665 (VKFENVHFRY…GGRYFDLVKA (237 aa)) form the ABC transporter 1 domain. 464 to 471 (GHSGCGKS) contributes to the ATP binding site. Positions 671–721 (DPEATEEFEEEEIDLDDTSRSSRRSSMTSARSGSEAFRRGNSLNDSFSGSK) are disordered. The span at 673–686 (EATEEFEEEEIDLD) shows a compositional bias: acidic residues. Residues 694–704 (RSSMTSARSGS) show a composition bias toward low complexity. A compositionally biased stretch (polar residues) spans 711–721 (NSLNDSFSGSK). Residues 766–1053 (FLGTVFALIR…SAQYFPEFVK (288 aa)) enclose the ABC transmembrane type-1 2 domain. Residues 767-789 (LGTVFALIRGLELPALALIFGWV) form a helical membrane-spanning segment. Topologically, residues 790–805 (FEGFTFVPYGGRMMHR) are extracellular. A helical membrane pass occupies residues 806–826 (MAMAVIAFASVGVGVWFSQLA). Over 827–886 (SSVLFAVVSENLSMRFRVQSFRNLLYQDASYFDNPAHAPGKLITRLASDAPNIKAVVDAR) the chain is Cytoplasmic. A helical transmembrane segment spans residues 887-907 (MLQVIYALAAIIANIAIAFIY). Over 908 to 910 (CWQ) the chain is Extracellular. Residues 911 to 931 (IGILGTSLILLLAFVMIGLAY) traverse the membrane as a helical segment. At 932-996 (KISLMNVEQI…KGMIEAINYS (65 aa)) the chain is on the cytoplasmic side. Residues 997-1017 (LTQSFMYFMMCFTYAVGIRII) form a helical membrane-spanning segment. The Extracellular segment spans residues 1018-1030 (YQGDKSSDDTFKG). The helical transmembrane segment at 1031 to 1051 (IIAMMLGAVAVMNSAQYFPEF) threads the bilayer. Residues 1052–1327 (VKAKTAAGML…KLIKKQDLAV (276 aa)) lie on the Cytoplasmic side of the membrane. Positions 1086–1322 (ILFENVKFSY…KGRYYKLIKK (237 aa)) constitute an ABC transporter 2 domain. 1121 to 1128 (GPSGSGKS) provides a ligand contact to ATP.

It belongs to the ABC transporter superfamily. ABCB family. Multidrug resistance exporter (TC 3.A.1.201) subfamily. In terms of tissue distribution, expressed in pharyngeal epithelial cells that surround the anterior pharyngeal cuticle. Shares same expression pattern as sms-5.

The protein localises to the apical cell membrane. Contributes to the establishment of a polar lipid barrier to block small molecule passage into the pharyngeal cuticle. Probably exports polar lipids into the developing pharyngeal cuticle to protect against xenobiotic insult. Likely functions in the same pathway as sphingomyelin synthase sms-5. This is P-glycoprotein 14 from Caenorhabditis elegans.